Reading from the N-terminus, the 83-residue chain is MVTIRLARGGSKKRPFYHLTVTNSRNARDGRFVERIGFFNPIAAGGEVRLSVDQERATYWLGQGAQPSERVAQLLKEAAKAAA.

It belongs to the bacterial ribosomal protein bS16 family.

The protein is Small ribosomal subunit protein bS16 of Ectopseudomonas mendocina (strain ymp) (Pseudomonas mendocina).